Consider the following 86-residue polypeptide: Muscarinic toxin 2 (86 aa).

The first 21 residues, 1–21 (MKTLLLTLVVVTIVCLDLGYT), serve as a signal peptide directing secretion. 4 disulfides stabilise this stretch: C24/C45, C38/C63, C67/C78, and C79/C84.

This sequence belongs to the three-finger toxin family. Short-chain subfamily. Aminergic toxin sub-subfamily. As to quaternary structure, monomer. Expressed by the venom gland.

The protein localises to the secreted. Its function is as follows. Binds irreversibly to M1 (CHRM1) muscarinic acetylcholine receptors, and reveals a slightly weaker effect on M3 (CHRM3) receptors. The mechanism of toxin-receptor interaction comprises at least two steps. The first step is fast with no competition between the toxin and the antagonist. The second step is slow with formation of a more stable toxin-receptor complex and inhibition of the antagonist binding. This is Muscarinic toxin 2 from Dendroaspis angusticeps (Eastern green mamba).